Here is a 118-residue protein sequence, read N- to C-terminus: D-dopachrome decarboxylase (118 aa).

P2 carries the post-translational modification N-acetylproline.

It belongs to the MIF family. Homotrimer.

The protein resides in the cytoplasm. The enzyme catalyses D-dopachrome + H(+) = 5,6-dihydroxyindole + CO2. Its function is as follows. Tautomerization of D-dopachrome with decarboxylation to give 5,6-dihydroxyindole (DHI). In Xenopus tropicalis (Western clawed frog), this protein is D-dopachrome decarboxylase (ddt).